Reading from the N-terminus, the 324-residue chain is 33 kDa ribonucleoprotein, chloroplastic (324 aa).

The N-terminal 71 residues, 1-71 (MSGCCFSFAA…YRSSIFLSTC (71 aa)), are a transit peptide targeting the chloroplast. 2 RRM domains span residues 114–192 (GRLY…FPEV) and 217–296 (HKLY…AGQK). Positions 294-324 (GQKAPVSSPPVVETSPENDSDNSELLSSLSS) are disordered. Positions 298–308 (PVSSPPVVETS) are enriched in low complexity.

The protein localises to the plastid. The protein resides in the chloroplast. Functionally, could be involved in splicing and/or processing of chloroplast RNA's. This chain is 33 kDa ribonucleoprotein, chloroplastic, found in Nicotiana sylvestris (Wood tobacco).